The chain runs to 154 residues: MELSDQEWKHVLDIWTKVESKLPEHGHEVIIRLLQEHPETQERFEKFKHMKTADEMKSSEKMKQHGNTVFTALGNILKQKGNHAEVLKPLAKSHALEHKIPVKYLEFISEIIVKVIAEKYPADFGADSQAAMRKALELFRNDMASKYKEFGYQG.

The region spanning E2–K148 is the Globin domain. Nitrite is bound at residue H65. H65 is an O2 binding site. H94 lines the heme b pocket.

It belongs to the globin family. In terms of assembly, monomeric.

Its subcellular location is the cytoplasm. The protein resides in the sarcoplasm. It carries out the reaction Fe(III)-heme b-[protein] + nitric oxide + H2O = Fe(II)-heme b-[protein] + nitrite + 2 H(+). It catalyses the reaction H2O2 + AH2 = A + 2 H2O. Its function is as follows. Monomeric heme protein which primary function is to store oxygen and facilitate its diffusion within muscle tissues. Reversibly binds oxygen through a pentacoordinated heme iron and enables its timely and efficient release as needed during periods of heightened demand. Depending on the oxidative conditions of tissues and cells, and in addition to its ability to bind oxygen, it also has a nitrite reductase activity whereby it regulates the production of bioactive nitric oxide. Under stress conditions, like hypoxia and anoxia, it also protects cells against reactive oxygen species thanks to its pseudoperoxidase activity. This Alligator mississippiensis (American alligator) protein is Myoglobin (MB).